We begin with the raw amino-acid sequence, 285 residues long: Purine biosynthesis transcriptional repressor PurR (285 aa).

Residues 1–73 (MKFRRSGRLV…GAAGGVKYIP (73 aa)) form a DNA binding domain region. Residues 74 to 285 (KMKQAEAEEF…NLLKNGETES (212 aa)) form an effector binding domain region. Tyr102 contacts guanosine 3',5'-bis(diphosphate). Positions 138, 139, 140, and 160 each coordinate 5-phospho-alpha-D-ribose 1-diphosphate. Positions 178 and 179 each coordinate guanosine 3',5'-bis(diphosphate). 5-phospho-alpha-D-ribose 1-diphosphate-binding residues include Asp203, Asp204, Phe205, Lys207, and Ala208. Residue Lys207 participates in guanosine 3',5'-bis(diphosphate) binding. Residues Gly209, Gly210, and Thr211 each coordinate guanosine 3',5'-bis(diphosphate). Residue Thr211 participates in 5-phospho-alpha-D-ribose 1-diphosphate binding.

This sequence belongs to the purine/pyrimidine phosphoribosyltransferase family. PurR subfamily. Homodimer.

Its activity is regulated as follows. The binding of PurR to DNA, and therefore the repressor activity, is influenced by interaction with the effector molecules 5-phosphoribosyl 1-pyrophosphate (PRPP) and (p)ppGpp. PRPP binds to PurR and reduces affinity of PurR for DNA, which inhibits the repressor activity and induces transcription of the target genes. On the contrary, (p)ppGpp enhances binding of PurR to DNA and repression of the transcription. PRPP and (p)ppGpp compete for PurR binding and allosteric control of transcription. ppGpp maintains PurR-DNA interaction and prevents PRPP from de-repressing PurR regulation during conditions that lead to (p)ppGpp induction, such as upon amino acid starvation. In terms of biological role, DNA-binding transcriptional repressor that controls the expression of a number of genes involved in the synthesis, metabolism and transport of purines. In response to a signal of excess adenine, represses the transcription of the pur operon, which encodes enzymes of the purine biosynthetic pathway. It also represses the expression of the purA and purR genes. In addition, controls the expression of several other genes or operons, which encode enzymes or transporters playing a role in purine nucleotide metabolism. Acts by binding directly to specific DNA sequences, named PurBoxes, in the upstream control regions of affected genes. Two PurBoxes are required for high-affinity PurR binding. Also responds to amino acid starvation via (p)ppGpp, which strongly increases PurR activity and repression of purine nucleotide biosynthesis genes. The polypeptide is Purine biosynthesis transcriptional repressor PurR (Bacillus subtilis (strain 168)).